The primary structure comprises 275 residues: Large ribosomal subunit protein uL2c (275 aa).

2 disordered regions span residues 36 to 56 and 224 to 275; these read KNHR…HRGK and VMNP…RKRK. Residues 255–275 show a composition bias toward basic residues; that stretch reads LGRKTRKKPKYSNRYILRKRK.

It belongs to the universal ribosomal protein uL2 family. Part of the 50S ribosomal subunit.

Its subcellular location is the plastid. The protein resides in the chloroplast. This is Large ribosomal subunit protein uL2c (rpl2) from Gracilaria tenuistipitata var. liui (Red alga).